Here is a 61-residue protein sequence, read N- to C-terminus: Large ribosomal subunit protein bL32 (61 aa).

The span at 1–19 (MAHPKRRQSKTRTAKRRTH) shows a compositional bias: basic residues. The tract at residues 1-20 (MAHPKRRQSKTRTAKRRTHD) is disordered.

It belongs to the bacterial ribosomal protein bL32 family.

The polypeptide is Large ribosomal subunit protein bL32 (Porphyromonas gingivalis (strain ATCC 33277 / DSM 20709 / CIP 103683 / JCM 12257 / NCTC 11834 / 2561)).